Here is a 193-residue protein sequence, read N- to C-terminus: Thymidine kinase (193 aa).

ATP-binding positions include 15–22 (GCMYSGKT) and 87–90 (DELH). The active-site Proton acceptor is the E88. 4 residues coordinate Zn(2+): C147, C150, C185, and C188.

Belongs to the thymidine kinase family. As to quaternary structure, homotetramer.

It localises to the cytoplasm. It carries out the reaction thymidine + ATP = dTMP + ADP + H(+). This is Thymidine kinase from Chloroflexus aurantiacus (strain ATCC 29366 / DSM 635 / J-10-fl).